The following is a 240-amino-acid chain: 26.7 kDa heat shock protein, chloroplastic (240 aa).

The N-terminal 43 residues, 1–43 (MAAPFALVSRVSPAARLPIRAAWRRARPTVGLPSSGRARQLAV), are a transit peptide targeting the chloroplast. The segment at 59–84 (HVNQDGGNQQGNAVQRRPRRSSALDG) is disordered. In terms of domain architecture, sHSP spans 126-240 (LATGEVRMPW…ERKVIDVQVQ (115 aa)).

The protein belongs to the small heat shock protein (HSP20) family. In terms of assembly, may form oligomeric structures. Expressed in roots, stems, leaves, spikelets and embryos.

The protein localises to the plastid. Its subcellular location is the chloroplast. This chain is 26.7 kDa heat shock protein, chloroplastic (HSP26.7), found in Oryza sativa subsp. japonica (Rice).